Here is a 73-residue protein sequence, read N- to C-terminus: Putative antitoxin VapB9 (73 aa).

Antitoxin component of a possible type II toxin-antitoxin (TA) system. The cognate toxin is VapC9. The sequence is that of Putative antitoxin VapB9 (vapB9) from Mycobacterium tuberculosis (strain CDC 1551 / Oshkosh).